Consider the following 382-residue polypeptide: Alanine racemase (382 aa).

Residue Lys-37 is the Proton acceptor; specific for D-alanine of the active site. Lys-37 carries the post-translational modification N6-(pyridoxal phosphate)lysine. Arg-135 lines the substrate pocket. Tyr-267 functions as the Proton acceptor; specific for L-alanine in the catalytic mechanism. A substrate-binding site is contributed by Met-315.

Belongs to the alanine racemase family. Pyridoxal 5'-phosphate serves as cofactor.

It carries out the reaction L-alanine = D-alanine. It participates in amino-acid biosynthesis; D-alanine biosynthesis; D-alanine from L-alanine: step 1/1. In terms of biological role, catalyzes the interconversion of L-alanine and D-alanine. May also act on other amino acids. The protein is Alanine racemase (alr) of Geobacter sulfurreducens (strain ATCC 51573 / DSM 12127 / PCA).